The following is a 252-amino-acid chain: Coenzyme F420:L-glutamate ligase (252 aa).

GTP is bound by residues 12-15 (VPLE), 44-45 (HT), and lysine 49. A divalent metal cation is bound at residue aspartate 114. Position 117 (asparagine 117) interacts with GTP. A divalent metal cation contacts are provided by aspartate 155, threonine 156, and glutamine 213. 211–218 (MGQADEGT) provides a ligand contact to GTP.

This sequence belongs to the CofE family. Homodimer. It depends on Mg(2+) as a cofactor. Mn(2+) serves as cofactor. K(+) is required as a cofactor.

It catalyses the reaction oxidized coenzyme F420-0 + GTP + L-glutamate = oxidized coenzyme F420-1 + GDP + phosphate + H(+). The enzyme catalyses oxidized coenzyme F420-1 + GTP + L-glutamate = oxidized coenzyme F420-2 + GDP + phosphate + H(+). It participates in cofactor biosynthesis; coenzyme F420 biosynthesis. Catalyzes the GTP-dependent successive addition of two or more gamma-linked L-glutamates to the L-lactyl phosphodiester of 7,8-didemethyl-8-hydroxy-5-deazariboflavin (F420-0) to form coenzyme F420-0-glutamyl-glutamate (F420-2) or polyglutamated F420 derivatives. In Methanopyrus kandleri (strain AV19 / DSM 6324 / JCM 9639 / NBRC 100938), this protein is Coenzyme F420:L-glutamate ligase.